The sequence spans 175 residues: NADH-ubiquinone oxidoreductase chain 6 (175 aa).

A run of 5 helical transmembrane segments spans residues 1-21 (MMMY…VGVS), 25-45 (SPIY…GVIL), 47-67 (FGGS…MLVV), 88-108 (VVLG…IYAL), and 149-169 (YGVW…VIIM).

The protein belongs to the complex I subunit 6 family. As to quaternary structure, core subunit of respiratory chain NADH dehydrogenase (Complex I) which is composed of 45 different subunits.

It localises to the mitochondrion inner membrane. The enzyme catalyses a ubiquinone + NADH + 5 H(+)(in) = a ubiquinol + NAD(+) + 4 H(+)(out). In terms of biological role, core subunit of the mitochondrial membrane respiratory chain NADH dehydrogenase (Complex I) which catalyzes electron transfer from NADH through the respiratory chain, using ubiquinone as an electron acceptor. Essential for the catalytic activity and assembly of complex I. The polypeptide is NADH-ubiquinone oxidoreductase chain 6 (MT-ND6) (Balaenoptera physalus (Fin whale)).